The sequence spans 370 residues: tRNA/tmRNA (uracil-C(5))-methyltransferase (370 aa).

S-adenosyl-L-methionine contacts are provided by Gln190, Tyr218, Asn223, Glu239, and Asp299. Cys324 serves as the catalytic Nucleophile. Glu358 serves as the catalytic Proton acceptor.

The protein belongs to the class I-like SAM-binding methyltransferase superfamily. RNA M5U methyltransferase family. TrmA subfamily.

The enzyme catalyses uridine(54) in tRNA + S-adenosyl-L-methionine = 5-methyluridine(54) in tRNA + S-adenosyl-L-homocysteine + H(+). It catalyses the reaction uridine(341) in tmRNA + S-adenosyl-L-methionine = 5-methyluridine(341) in tmRNA + S-adenosyl-L-homocysteine + H(+). In terms of biological role, dual-specificity methyltransferase that catalyzes the formation of 5-methyluridine at position 54 (m5U54) in all tRNAs, and that of position 341 (m5U341) in tmRNA (transfer-mRNA). The protein is tRNA/tmRNA (uracil-C(5))-methyltransferase of Sodalis glossinidius (strain morsitans).